The chain runs to 383 residues: Queuine tRNA-ribosyltransferase (383 aa).

Catalysis depends on D92, which acts as the Proton acceptor. Substrate is bound by residues 92–96 (DSGGF), D146, Q190, and G217. The interval 248–254 (GVGKPED) is RNA binding. Residue D267 is the Nucleophile of the active site. The RNA binding; important for wobble base 34 recognition stretch occupies residues 272 to 276 (TRNAR). Zn(2+) is bound by residues C310, C312, C315, and H341.

The protein belongs to the queuine tRNA-ribosyltransferase family. As to quaternary structure, homodimer. Within each dimer, one monomer is responsible for RNA recognition and catalysis, while the other monomer binds to the replacement base PreQ1. The cofactor is Zn(2+).

The enzyme catalyses 7-aminomethyl-7-carbaguanine + guanosine(34) in tRNA = 7-aminomethyl-7-carbaguanosine(34) in tRNA + guanine. Its pathway is tRNA modification; tRNA-queuosine biosynthesis. In terms of biological role, catalyzes the base-exchange of a guanine (G) residue with the queuine precursor 7-aminomethyl-7-deazaguanine (PreQ1) at position 34 (anticodon wobble position) in tRNAs with GU(N) anticodons (tRNA-Asp, -Asn, -His and -Tyr). Catalysis occurs through a double-displacement mechanism. The nucleophile active site attacks the C1' of nucleotide 34 to detach the guanine base from the RNA, forming a covalent enzyme-RNA intermediate. The proton acceptor active site deprotonates the incoming PreQ1, allowing a nucleophilic attack on the C1' of the ribose to form the product. After dissociation, two additional enzymatic reactions on the tRNA convert PreQ1 to queuine (Q), resulting in the hypermodified nucleoside queuosine (7-(((4,5-cis-dihydroxy-2-cyclopenten-1-yl)amino)methyl)-7-deazaguanosine). This is Queuine tRNA-ribosyltransferase from Psychrobacter sp. (strain PRwf-1).